The sequence spans 83 residues: Ferredoxin (83 aa).

4Fe-4S ferredoxin-type domains follow at residues 2-29 (ALMI…QGDE) and 31-64 (YVIE…KDPS). [4Fe-4S] cluster contacts are provided by Cys9, Cys12, Cys15, Cys19, Cys38, Cys41, Cys50, and Cys54.

[4Fe-4S] cluster serves as cofactor.

Functionally, ferredoxins are iron-sulfur proteins that transfer electrons in a wide variety of metabolic reactions. The sequence is that of Ferredoxin (fdx) from Allochromatium vinosum (strain ATCC 17899 / DSM 180 / NBRC 103801 / NCIMB 10441 / D) (Chromatium vinosum).